Reading from the N-terminus, the 265-residue chain is tRNA (guanine-N(1)-)-methyltransferase (265 aa).

Residues Gly-119 and 139–144 (IGDYVL) contribute to the S-adenosyl-L-methionine site.

It belongs to the RNA methyltransferase TrmD family. Homodimer.

Its subcellular location is the cytoplasm. It carries out the reaction guanosine(37) in tRNA + S-adenosyl-L-methionine = N(1)-methylguanosine(37) in tRNA + S-adenosyl-L-homocysteine + H(+). Specifically methylates guanosine-37 in various tRNAs. This is tRNA (guanine-N(1)-)-methyltransferase from Alcanivorax borkumensis (strain ATCC 700651 / DSM 11573 / NCIMB 13689 / SK2).